We begin with the raw amino-acid sequence, 131 residues long: D-ribose pyranase (131 aa).

His20 functions as the Proton donor in the catalytic mechanism. Substrate is bound by residues Asp28, His98, and 120 to 122; that span reads YAN.

Belongs to the RbsD / FucU family. RbsD subfamily. Homodecamer.

The protein resides in the cytoplasm. The catalysed reaction is beta-D-ribopyranose = beta-D-ribofuranose. It participates in carbohydrate metabolism; D-ribose degradation; D-ribose 5-phosphate from beta-D-ribopyranose: step 1/2. Catalyzes the interconversion of beta-pyran and beta-furan forms of D-ribose. This chain is D-ribose pyranase, found in Clostridium novyi (strain NT).